Consider the following 300-residue polypeptide: Beta-lactamase (300 aa).

The first 29 residues, 1–29, serve as a signal peptide directing secretion; sequence MTMFKTTFRQTATIAVSLISLLVSPMLWA. The active-site Acyl-ester intermediate is the S75. 239–241 contributes to the substrate binding site; sequence KTG.

It belongs to the class-A beta-lactamase family. As to quaternary structure, monomer.

The catalysed reaction is a beta-lactam + H2O = a substituted beta-amino acid. Hydrolyzes broad-spectrum beta-lactam antibiotics. Active against cephalosporins such as cefuroxime and cefotaxime. This chain is Beta-lactamase (blaB), found in Proteus vulgaris.